A 1475-amino-acid polypeptide reads, in one-letter code: Amylopullulanase (1475 aa).

Residues 1–31 (MFKRRALGFLLAFLLVFTAVFGSMPMEFAKA) form the signal peptide. Asp-245, Asn-247, Asp-285, Asp-340, Asn-398, Asp-400, Asn-403, Asp-404, Gly-449, and Asp-451 together coordinate Ca(2+). Residues His-524 and Arg-627 each contribute to the substrate site. Asp-629 functions as the Nucleophile in the catalytic mechanism. The Proton donor role is filled by Glu-658. Residues 734–735 (HD), Asp-794, and Arg-798 contribute to the substrate site. Fibronectin type-III domains lie at 928 to 1019 (APQP…PAFP) and 1164 to 1257 (TPTA…TPDI). Residues 1255–1362 (PDIIPIKVTF…VNDTVQRWRD (108 aa)) form the CBM20 domain.

The protein belongs to the glycosyl hydrolase 13 family. It depends on Ca(2+) as a cofactor.

It carries out the reaction Endohydrolysis of (1-&gt;4)-alpha-D-glucosidic linkages in polysaccharides containing three or more (1-&gt;4)-alpha-linked D-glucose units.. The catalysed reaction is Hydrolysis of (1-&gt;6)-alpha-D-glucosidic linkages in pullulan, amylopectin and glycogen, and in the alpha- and beta-limit dextrins of amylopectin and glycogen.. The protein is Amylopullulanase (apu) of Thermoanaerobacter thermohydrosulfuricus (Clostridium thermohydrosulfuricum).